Here is a 71-residue protein sequence, read N- to C-terminus: MKKEIHPNFKEVKATCTSCGKEHIFGSTVEKISLDVCSNCHAFYTGDRSTVKARGRVERFNKILEKSKTSA.

It belongs to the bacterial ribosomal protein bL31 family. Type A subfamily. As to quaternary structure, part of the 50S ribosomal subunit.

Its function is as follows. Binds the 23S rRNA. In Metamycoplasma arthritidis (strain 158L3-1) (Mycoplasma arthritidis), this protein is Large ribosomal subunit protein bL31.